A 148-amino-acid polypeptide reads, in one-letter code: Large ribosomal subunit protein bL9 (148 aa).

This sequence belongs to the bacterial ribosomal protein bL9 family.

Its function is as follows. Binds to the 23S rRNA. This chain is Large ribosomal subunit protein bL9, found in Salinispora arenicola (strain CNS-205).